A 216-amino-acid chain; its full sequence is Octanoyltransferase (216 aa).

Residues Asn-35–Phe-213 form the BPL/LPL catalytic domain. Substrate is bound by residues Arg-77 to His-84, Ser-144 to Gly-146, and Gly-157 to Ser-159. The Acyl-thioester intermediate role is filled by Cys-175.

It belongs to the LipB family.

Its subcellular location is the cytoplasm. The enzyme catalyses octanoyl-[ACP] + L-lysyl-[protein] = N(6)-octanoyl-L-lysyl-[protein] + holo-[ACP] + H(+). The protein operates within protein modification; protein lipoylation via endogenous pathway; protein N(6)-(lipoyl)lysine from octanoyl-[acyl-carrier-protein]: step 1/2. In terms of biological role, catalyzes the transfer of endogenously produced octanoic acid from octanoyl-acyl-carrier-protein onto the lipoyl domains of lipoate-dependent enzymes. Lipoyl-ACP can also act as a substrate although octanoyl-ACP is likely to be the physiological substrate. This chain is Octanoyltransferase, found in Prochlorococcus marinus (strain MIT 9301).